We begin with the raw amino-acid sequence, 60 residues long: MSQKTVKVQLVRSLIGTREDHRATVRGLGLRRLNSVSELQDTPAVRGMINKVSYLVKVLA.

The protein belongs to the universal ribosomal protein uL30 family. As to quaternary structure, part of the 50S ribosomal subunit.

The sequence is that of Large ribosomal subunit protein uL30 from Cupriavidus metallidurans (strain ATCC 43123 / DSM 2839 / NBRC 102507 / CH34) (Ralstonia metallidurans).